A 347-amino-acid chain; its full sequence is Metacaspase-2 (347 aa).

Residues 1-70 are regulates substrate access to the active site; the sequence is MCSLITQLCD…QPWVATPLPG (70 aa). Residue histidine 158 is part of the active site. Ca(2+)-binding residues include aspartate 173, aspartate 189, and aspartate 190. Cysteine 213 is a catalytic residue. Aspartate 220 is a Ca(2+) binding site.

It belongs to the peptidase C14B family. As to quaternary structure, monomer. Auto-proteolytic cleavage of the propeptide after Lys-55 and between the large and small subunits after Lys-268 is required for catalytic activity towards large protein substrates but is dispensable towards small oligopeptide substrates. After processing, the propeptide and the large and small subunits remain associated by non-covalent bonds. In vivo, the unprocessed enzyme appears to be the predominant form.

The protein resides in the recycling endosome. Activated by Ca(2+). In response to calcium binding, the 280-loop, the 280-loop, a disordered loop consisting of residues 269-275, undergoes a conformational change which stabilizes substrates in the active site. The binding to the substrate triggers the release of the N-terminal region resulting in the activation of the enzyme. Proteolytic cleavage is required for catalytic activity towards large protein substrates. Functionally, cysteine protease that cleaves specifically after arginine or lysine residues. The polypeptide is Metacaspase-2 (Trypanosoma brucei brucei).